The chain runs to 389 residues: Alanine racemase TOXG (389 aa).

Position 235 is an N6-(pyridoxal phosphate)lysine (Lys235).

Belongs to the threonine aldolase family. Pyridoxal 5'-phosphate is required as a cofactor.

It carries out the reaction L-alanine = D-alanine. The protein operates within mycotoxin biosynthesis; HC-toxin biosynthesis. Alanine racemase, part of the diffuse TOX2 gene cluster that mediates the biosynthesis of the HC-toxin, cyclic tetrapeptide of structure cyclo(D-Pro-L-Ala-D-Ala-L-Aeo), where Aeo stands for 2-amino-9,10-epoxi-8-oxodecanoic acid. HC-toxin is a determinant of specificity and virulence in the interaction between the producing fungus and its host, maize. TOXG catalyzes the conversion of L-alanine into D-alanine, an essential precursor for the production of the major forms of HC-toxin by the non-ribosomal peptide synthetase HTS1. This is Alanine racemase TOXG from Cochliobolus carbonum (Maize leaf spot fungus).